A 79-amino-acid chain; its full sequence is Sulfur carrier protein TusA (79 aa).

C17 (cysteine persulfide intermediate) is an active-site residue.

The protein belongs to the sulfur carrier protein TusA family.

It is found in the cytoplasm. Its function is as follows. Sulfur carrier protein which probably makes part of a sulfur-relay system. The sequence is that of Sulfur carrier protein TusA from Actinobacillus succinogenes (strain ATCC 55618 / DSM 22257 / CCUG 43843 / 130Z).